A 721-amino-acid chain; its full sequence is Angiomotin-like 2a (721 aa).

The tract at residues Gln-35–His-84 is disordered. Low complexity predominate over residues Ser-49–Ser-68. Tyr-103 is modified (phosphotyrosine; by FGFR1). The tract at residues Asp-169–Ser-214 is disordered. Residues Pro-172–Gln-198 show a composition bias toward polar residues. Residues Ala-275–Glu-531 adopt a coiled-coil conformation. Over residues Ile-554–Asn-567 the composition is skewed to polar residues. Disordered stretches follow at residues Ile-554–His-575 and Asp-666–Ser-709. Residues Ser-688–Ser-702 show a composition bias toward low complexity. The PDZ-binding signature appears at Glu-718–Ile-721.

This sequence belongs to the angiomotin family. In terms of assembly, interacts with SRC. Post-translationally, phosphorylation at Tyr-103 is necessary for efficient binding to SRC and synergistically functioning with SRC to activate the downstream MAPK pathway. In terms of tissue distribution, expressed in endothelial cells.

Its subcellular location is the recycling endosome. It localises to the cytoplasm. It is found in the cell projection. The protein localises to the podosome. The protein resides in the cell junction. Its function is as follows. Required for proper architecture of actin filaments and for cell movements during embryogenesis. Plays a role in the radial actin fiber architecture in skin epithelial cells, thereby maintains cell geometry, size and cell interconnectivity within the skin. Plays an important role in coupling actin fibers to cell junctions in endothelial cells and is therefore required for correct endothelial cell morphology and maintenance of dorsal aorta lumen expansion during embryogenesis. May further play a role in the polarity, proliferation and migration of endothelial cells, and therefore participates in angiogenesis. Inhibits the Wnt/beta-catenin signaling pathway, probably by recruiting CTNNB1 to recycling endosomes and hence preventing its translocation to the nucleus. Regulates the translocation of phosphorylated SRC to peripheral cell-matrix adhesion sites. Selectively promotes FGF-induced MAPK activation through SRC. This Danio rerio (Zebrafish) protein is Angiomotin-like 2a (amotl2a).